The primary structure comprises 248 residues: Pulmonary surfactant-associated protein A (248 aa).

The first 20 residues, 1–20, serve as a signal peptide directing secretion; it reads MLLCSLTLTLLWMVASGLEC. Positions 28–100 constitute a Collagen-like domain; the sequence is GSPGIPGTPG…PGERGPPGFP (73 aa). Positions 29-102 are disordered; sequence SPGIPGTPGS…ERGPPGFPAY (74 aa). A 4-hydroxyproline mark is found at proline 30, proline 33, proline 36, proline 42, proline 54, proline 57, proline 63, proline 67, and proline 70. Positions 42-51 are enriched in basic and acidic residues; it reads PGRDGRDGIK. The segment covering 54–65 has biased composition (pro residues); it reads PGPPGPMGPPGG. Residues 69-82 show a composition bias toward low complexity; the sequence is LPGRDGMTGAPGLP. Residues 84 to 93 are compositionally biased toward basic and acidic residues; it reads ERGEKGEPGE. In terms of domain architecture, C-type lectin spans 132–248; the sequence is LAVGEKVFST…LQYRLAICEF (117 aa). 2 cysteine pairs are disulfide-bonded: cysteine 155–cysteine 246 and cysteine 224–cysteine 238. An N-linked (GlcNAc...) asparagine glycan is attached at asparagine 207. Residues glutamate 215, arginine 217, asparagine 234, and aspartate 235 each coordinate Ca(2+).

The protein belongs to the SFTPA family. In terms of assembly, oligomeric complex of 6 set of homotrimers.

The protein localises to the secreted. It localises to the extracellular space. It is found in the extracellular matrix. Its subcellular location is the surface film. In presence of calcium ions, it binds to surfactant phospholipids and contributes to lower the surface tension at the air-liquid interface in the alveoli of the mammalian lung and is essential for normal respiration. Enhances the expression of MYO18A/SP-R210 on alveolar macrophages. The sequence is that of Pulmonary surfactant-associated protein A (SFTPA1) from Bos taurus (Bovine).